The sequence spans 217 residues: 3,4-dihydroxy-2-butanone 4-phosphate synthase (217 aa).

D-ribulose 5-phosphate contacts are provided by residues 37–38 (RE), aspartate 42, 150–154 (RGGHT), and glutamate 174. Glutamate 38 serves as a coordination point for Mg(2+). Histidine 153 is a Mg(2+) binding site.

The protein belongs to the DHBP synthase family. Homodimer. The cofactor is Mg(2+). Requires Mn(2+) as cofactor.

It carries out the reaction D-ribulose 5-phosphate = (2S)-2-hydroxy-3-oxobutyl phosphate + formate + H(+). It functions in the pathway cofactor biosynthesis; riboflavin biosynthesis; 2-hydroxy-3-oxobutyl phosphate from D-ribulose 5-phosphate: step 1/1. Its function is as follows. Catalyzes the conversion of D-ribulose 5-phosphate to formate and 3,4-dihydroxy-2-butanone 4-phosphate. This is 3,4-dihydroxy-2-butanone 4-phosphate synthase from Pectobacterium atrosepticum (strain SCRI 1043 / ATCC BAA-672) (Erwinia carotovora subsp. atroseptica).